Here is a 227-residue protein sequence, read N- to C-terminus: Flagellar L-ring protein (227 aa).

The first 16 residues, 1–16, serve as a signal peptide directing secretion; sequence MRNIILFAAGTLLLSG. A lipid anchor (N-palmitoyl cysteine) is attached at Cys17. Cys17 is lipidated: S-diacylglycerol cysteine.

The protein belongs to the FlgH family. As to quaternary structure, the basal body constitutes a major portion of the flagellar organelle and consists of four rings (L,P,S, and M) mounted on a central rod.

The protein localises to the cell outer membrane. It localises to the bacterial flagellum basal body. Functionally, assembles around the rod to form the L-ring and probably protects the motor/basal body from shearing forces during rotation. This Pseudoalteromonas translucida (strain TAC 125) protein is Flagellar L-ring protein.